Consider the following 682-residue polypeptide: Potassium-transporting ATPase ATP-binding subunit (682 aa).

The next 4 membrane-spanning stretches (helical) occupy residues 34–54 (PVMFIVWIGSLLTTCISIAMA), 62–82 (ALFSAAISGWLWVTVLFANFA), 219–239 (IALTILLIALTIVFLLATATL), and 254–274 (VLVALLVCLIPTTIGGLLSAI). Residue Asp307 is the 4-aspartylphosphate intermediate of the active site. ATP is bound by residues Asp344, Glu348, 377–384 (FTAQSRMS), and Lys395. Mg(2+)-binding residues include Asp518 and Asp522. 3 helical membrane-spanning segments follow: residues 588-608 (FAIIPAAFAATYPQLNALNIM), 616-636 (AILSAVIFNALIIVFLIPLAL), and 656-676 (IYGLGGLLVPFIGIKVIDLLL).

The protein belongs to the cation transport ATPase (P-type) (TC 3.A.3) family. Type IA subfamily. As to quaternary structure, the system is composed of three essential subunits: KdpA, KdpB and KdpC.

Its subcellular location is the cell inner membrane. The catalysed reaction is K(+)(out) + ATP + H2O = K(+)(in) + ADP + phosphate + H(+). In terms of biological role, part of the high-affinity ATP-driven potassium transport (or Kdp) system, which catalyzes the hydrolysis of ATP coupled with the electrogenic transport of potassium into the cytoplasm. This subunit is responsible for energy coupling to the transport system and for the release of the potassium ions to the cytoplasm. The polypeptide is Potassium-transporting ATPase ATP-binding subunit (Shigella boydii serotype 4 (strain Sb227)).